Here is a 180-residue protein sequence, read N- to C-terminus: NADH-quinone oxidoreductase subunit I (180 aa).

4Fe-4S ferredoxin-type domains lie at 50 to 80 (LTRDPDGEERCVACNLCAVACPVGCISLQKA) and 90 to 119 (EFFRINFSRCIFCGLCEEACPTTAIQLTPD). C60, C63, C66, C70, C99, C102, C105, and C109 together coordinate [4Fe-4S] cluster.

It belongs to the complex I 23 kDa subunit family. In terms of assembly, NDH-1 is composed of 13 different subunits. Subunits NuoA, H, J, K, L, M, N constitute the membrane sector of the complex. It depends on [4Fe-4S] cluster as a cofactor.

It is found in the cell inner membrane. The catalysed reaction is a quinone + NADH + 5 H(+)(in) = a quinol + NAD(+) + 4 H(+)(out). Functionally, NDH-1 shuttles electrons from NADH, via FMN and iron-sulfur (Fe-S) centers, to quinones in the respiratory chain. The immediate electron acceptor for the enzyme in this species is believed to be ubiquinone. Couples the redox reaction to proton translocation (for every two electrons transferred, four hydrogen ions are translocated across the cytoplasmic membrane), and thus conserves the redox energy in a proton gradient. This is NADH-quinone oxidoreductase subunit I from Shigella sonnei (strain Ss046).